The chain runs to 220 residues: UPF0758 protein Asuc_0013 (220 aa).

The MPN domain occupies 98 to 220 (EFTNPLTVRL…YFSFAEQDWL (123 aa)). Positions 169, 171, and 182 each coordinate Zn(2+). The JAMM motif signature appears at 169 to 182 (HNHPSGSAEPSASD).

Belongs to the UPF0758 family.

This chain is UPF0758 protein Asuc_0013, found in Actinobacillus succinogenes (strain ATCC 55618 / DSM 22257 / CCUG 43843 / 130Z).